The primary structure comprises 2313 residues: Protein Ycf2 (2313 aa).

1606–1613 (GSMETGRS) serves as a coordination point for ATP.

It belongs to the Ycf2 family.

It localises to the plastid. The protein localises to the chloroplast stroma. In terms of biological role, probable ATPase of unknown function. Its presence in a non-photosynthetic plant (Epifagus virginiana) and experiments in tobacco indicate that it has an essential function which is probably not related to photosynthesis. This chain is Protein Ycf2, found in Psilotum nudum (Whisk fern).